Consider the following 57-residue polypeptide: uncharacterized protein (57 aa).

A helical membrane pass occupies residues proline 3 to leucine 23. The segment at lysine 38–threonine 57 is disordered.

The protein resides in the host membrane. This is an uncharacterized protein from Acidianus bottle-shaped virus (isolate Italy/Pozzuoli) (ABV).